A 336-amino-acid polypeptide reads, in one-letter code: Biotin synthase (336 aa).

The region spanning Q54 to R281 is the Radical SAM core domain. [4Fe-4S] cluster-binding residues include C69, C73, and C76. [2Fe-2S] cluster-binding residues include C113, C144, C204, and R276.

Belongs to the radical SAM superfamily. Biotin synthase family. Homodimer. Requires [4Fe-4S] cluster as cofactor. [2Fe-2S] cluster is required as a cofactor.

The catalysed reaction is (4R,5S)-dethiobiotin + (sulfur carrier)-SH + 2 reduced [2Fe-2S]-[ferredoxin] + 2 S-adenosyl-L-methionine = (sulfur carrier)-H + biotin + 2 5'-deoxyadenosine + 2 L-methionine + 2 oxidized [2Fe-2S]-[ferredoxin]. The protein operates within cofactor biosynthesis; biotin biosynthesis; biotin from 7,8-diaminononanoate: step 2/2. In terms of biological role, catalyzes the conversion of dethiobiotin (DTB) to biotin by the insertion of a sulfur atom into dethiobiotin via a radical-based mechanism. The chain is Biotin synthase from Actinobacillus pleuropneumoniae serotype 7 (strain AP76).